The sequence spans 351 residues: Protein-glutamate methylesterase/protein-glutamine glutaminase (351 aa).

A Response regulatory domain is found at 8 to 125 (TVVVVDDSLT…GEDPFAGLGD (118 aa)). 4-aspartylphosphate is present on aspartate 59. The region spanning 151 to 345 (PKIGTVVGIG…PAILNLCERR (195 aa)) is the CheB-type methylesterase domain. Catalysis depends on residues serine 162, histidine 188, and aspartate 287.

The protein belongs to the CheB family. Post-translationally, phosphorylated by CheA. Phosphorylation of the N-terminal regulatory domain activates the methylesterase activity.

Its subcellular location is the cytoplasm. The catalysed reaction is [protein]-L-glutamate 5-O-methyl ester + H2O = L-glutamyl-[protein] + methanol + H(+). It catalyses the reaction L-glutaminyl-[protein] + H2O = L-glutamyl-[protein] + NH4(+). In terms of biological role, involved in chemotaxis. Part of a chemotaxis signal transduction system that modulates chemotaxis in response to various stimuli. Catalyzes the demethylation of specific methylglutamate residues introduced into the chemoreceptors (methyl-accepting chemotaxis proteins or MCP) by CheR. Also mediates the irreversible deamidation of specific glutamine residues to glutamic acid. The sequence is that of Protein-glutamate methylesterase/protein-glutamine glutaminase from Gluconobacter oxydans (strain 621H) (Gluconobacter suboxydans).